The following is a 1290-amino-acid chain: Nonribosomal peptide synthetase 6 (1290 aa).

The tract at residues 1–27 (MTAIDVPWLSTPRRDNSHGTRSNSSCQ) is disordered. The tract at residues 260–657 (SYQELDCQAS…AQVEHHLRSC (398 aa)) is adenylation. A Carrier domain is found at 775 to 851 (APETELERKL…GLAQTHRHPV (77 aa)). O-(pantetheine 4'-phosphoryl)serine is present on Ser812. A disordered region spans residues 846-870 (THRHPVRRAEVPRSSHDPDPFGRVR). Residues 852–870 (RRAEVPRSSHDPDPFGRVR) show a composition bias toward basic and acidic residues. The tract at residues 914-1162 (GGQLDPEQLR…PCMNIIPVRV (249 aa)) is condensation.

It belongs to the NRP synthetase family.

Nonribosomal peptide synthesis (NRPS) is a key mechanism responsible for the biosynthesis of bioactive metabolites which are potentially contributing to organismal virulence. The polypeptide is Nonribosomal peptide synthetase 6 (NRPS6) (Aspergillus fumigatus (strain ATCC MYA-4609 / CBS 101355 / FGSC A1100 / Af293) (Neosartorya fumigata)).